The chain runs to 338 residues: L-serine dehydratase (338 aa).

Position 39 is an N6-(pyridoxal phosphate)lysine (K39).

Belongs to the serine/threonine dehydratase family. Pyridoxal 5'-phosphate is required as a cofactor.

Its subcellular location is the cytoplasm. The catalysed reaction is L-serine = pyruvate + NH4(+). Its pathway is carbohydrate biosynthesis; gluconeogenesis. The chain is L-serine dehydratase (SDL1) from Saccharomyces cerevisiae (strain YJM789) (Baker's yeast).